Consider the following 459-residue polypeptide: Serine carboxypeptidase-like 27 (459 aa).

An N-terminal signal peptide occupies residues 1-20; sequence MDYSFLLIILLLTISTSCCA. Cystine bridges form between Cys91/Cys344, Cys252/Cys264, and Cys288/Cys312. N-linked (GlcNAc...) asparagine glycosylation is present at Asn142. The active site involves Ser184. Residues Asn289 and Asn333 are each glycosylated (N-linked (GlcNAc...) asparagine). Residues Asp381 and His433 contribute to the active site.

This sequence belongs to the peptidase S10 family. As to expression, ubiquitous.

It localises to the secreted. Its function is as follows. Probable carboxypeptidase. This chain is Serine carboxypeptidase-like 27 (SCPL27), found in Arabidopsis thaliana (Mouse-ear cress).